A 144-amino-acid chain; its full sequence is Large ribosomal subunit protein uL15 (144 aa).

Residues 1–14 (MKLHELKPNEGARD) are compositionally biased toward basic and acidic residues. The segment at 1–43 (MKLHELKPNEGARDVRKRVGRGTSSGTGKTAGRGQKGQKARSK) is disordered. Positions 23–35 (TSSGTGKTAGRGQ) are enriched in gly residues.

Belongs to the universal ribosomal protein uL15 family. As to quaternary structure, part of the 50S ribosomal subunit.

In terms of biological role, binds to the 23S rRNA. This Latilactobacillus sakei subsp. sakei (strain 23K) (Lactobacillus sakei subsp. sakei) protein is Large ribosomal subunit protein uL15.